Reading from the N-terminus, the 329-residue chain is Mitochondrial nuclease (329 aa).

H138 functions as the Proton acceptor in the catalytic mechanism. A Mg(2+)-binding site is contributed by N170.

It belongs to the DNA/RNA non-specific endonuclease family. In terms of assembly, homodimer. Requires Mn(2+) as cofactor. The cofactor is Mg(2+).

Its subcellular location is the mitochondrion inner membrane. In terms of biological role, this enzyme has both RNase and DNase activity. The chain is Mitochondrial nuclease (NUC1) from Saccharomyces cerevisiae (strain ATCC 204508 / S288c) (Baker's yeast).